Here is a 440-residue protein sequence, read N- to C-terminus: Damage-control phosphatase ARMT1 (440 aa).

Mn(2+) contacts are provided by Asp252 and Asn253. Substrate is bound at residue 252–253 (DN). S-adenosyl-L-methionine-binding residues include Glu257 and Asp290. Asp290 is a Mn(2+) binding site. Residues 366 to 370 (DLNYR) and Lys403 contribute to the substrate site. A Subfamily III RTxK motif motif is present at residues 400–403 (RTLK).

This sequence belongs to the damage-control phosphatase family. Sugar phosphate phosphatase III subfamily. Requires Mn(2+) as cofactor. Ni(2+) serves as cofactor. Automethylated.

The enzyme catalyses beta-D-fructose 1-phosphate + H2O = D-fructose + phosphate. It carries out the reaction beta-D-fructose 6-phosphate = dihydroxyacetone + D-glyceraldehyde 3-phosphate. The catalysed reaction is L-glutamyl-[protein] + S-adenosyl-L-methionine = [protein]-L-glutamate 5-O-methyl ester + S-adenosyl-L-homocysteine. In terms of biological role, metal-dependent phosphatase that shows phosphatase activity against several substrates, including fructose-1-phosphate and fructose-6-phosphate. Its preference for fructose-1-phosphate, a strong glycating agent that causes DNA damage rather than a canonical yeast metabolite, suggests a damage-control function in hexose phosphate metabolism. Has also been shown to have O-methyltransferase activity that methylates glutamate residues of target proteins to form gamma-glutamyl methyl ester residues. Possibly methylates PCNA, suggesting it is involved in the DNA damage response. In Xenopus tropicalis (Western clawed frog), this protein is Damage-control phosphatase ARMT1.